The chain runs to 208 residues: Uracil phosphoribosyltransferase (208 aa).

Residues Arg78, Arg103, and 130–138 contribute to the 5-phospho-alpha-D-ribose 1-diphosphate site; that span reads DPMLATGGS. Uracil-binding positions include Ile193 and 198-200; that span reads GDA. Asp199 serves as a coordination point for 5-phospho-alpha-D-ribose 1-diphosphate.

The protein belongs to the UPRTase family. It depends on Mg(2+) as a cofactor.

It carries out the reaction UMP + diphosphate = 5-phospho-alpha-D-ribose 1-diphosphate + uracil. The protein operates within pyrimidine metabolism; UMP biosynthesis via salvage pathway; UMP from uracil: step 1/1. Allosterically activated by GTP. Functionally, catalyzes the conversion of uracil and 5-phospho-alpha-D-ribose 1-diphosphate (PRPP) to UMP and diphosphate. The polypeptide is Uracil phosphoribosyltransferase (Shewanella sp. (strain ANA-3)).